We begin with the raw amino-acid sequence, 2475 residues long: Non-reducing polyketide synthase prhL (2475 aa).

Residues 14–253 are N-terminal acylcarrier protein transacylase domain (SAT); that stretch reads VLFGSKYSEI…HHADHLSAAQ (240 aa). A Ketosynthase family 3 (KS3) domain is found at 384–800; the sequence is SIPIAVTGLA…GSNAAIVLKE (417 aa). Residues Cys549, His684, and His723 each act as for beta-ketoacyl synthase activity in the active site. The tract at residues 910–1212 is malonyl-CoA:ACP transacylase (MAT) domain; that stretch reads LCFGGQTGNK…CPMDLSGPQA (303 aa). Ser997 serves as the catalytic For acyl/malonyl transferase activity. The interval 1279–1407 is N-terminal hotdog fold; it reads EGLKLVQLLK…GTISLSPGAN (129 aa). In terms of domain architecture, PKS/mFAS DH spans 1279-1586; sequence EGLKLVQLLK…FTSVSIQSLR (308 aa). Residues 1282 to 1585 form a product template (PT) domain region; sequence KLVQLLKNEG…TFTSVSIQSL (304 aa). His1312 acts as the Proton acceptor; for dehydratase activity in catalysis. The interval 1435–1586 is C-terminal hotdog fold; the sequence is SSSGLKRSTV…FTSVSIQSLR (152 aa). Residue Asp1493 is the Proton donor; for dehydratase activity of the active site. The Carrier domain maps to 1626 to 1703; the sequence is SSNGDDLRTV…ALVQRIFPGR (78 aa). An O-(pantetheine 4'-phosphoryl)serine modification is found at Ser1663. The methyltransferase (CMeT) domain stretch occupies residues 1865–2098; the sequence is HHTSEHKLLH…GFNWVDWTDN (234 aa). The thioesterase (TE) domain stretch occupies residues 2127–2475; it reads SDIHEETVVY…YEFLRSHVRL (349 aa). Active-site for thioesterase activity residues include Ser2250 and Asp2412.

It carries out the reaction 3 malonyl-CoA + acetyl-CoA + 2 S-adenosyl-L-methionine = 3,5-dimethylorsellinate + 2 S-adenosyl-L-homocysteine + 3 CO2 + 4 CoA. It participates in secondary metabolite biosynthesis; terpenoid biosynthesis. Its function is as follows. Non-reducing polyketide synthase; part of the gene cluster that mediates the biosynthesis of paraherquonin, a meroterpenoid with a unique, highly congested hexacyclic molecular architecture. The first step of the pathway is the synthesis of 3,5-dimethylorsellinic acid (DMOA) by the polyketide synthase prhL. Synthesis of DMOA is followed by farnesylation by the prenyltransferase prhE, methylesterification by the methyl-transferase prhM, epoxidation of the prenyl chain by the flavin-dependent monooxygenase prhF, and cyclization of the farnesyl moiety by the terpene cyclase prhH, to yield the tetracyclic intermediate, protoaustinoid A. The short chain dehydrogenase prhI then oxidizes the C-3 alcohol group of the terpene cyclase product to transform protoaustinoid A into protoaustinoid B. The FAD-binding monooxygenase prhJ catalyzes the oxidation of protoaustinoid B into preaustinoid A which is further oxidized into preaustinoid A1 by FAD-binding monooxygenase phrK. Finally, prhA leads to berkeleydione via the berkeleyone B intermediate. PrhA is a multifunctional dioxygenase that first desaturates at C5-C6 to form berkeleyone B, followed by rearrangement of the A/B-ring to form the cycloheptadiene moiety in berkeleydione. Berkeleydione serves as the key intermediate for the biosynthesis of paraherquonin as well as many other meroterpenoids. The cytochrome P450 monooxygenases prhB, prhD, and prhN, as well as the isomerase prhC, are probably involved in the late stage of paraherquonin biosynthesis, after the production of berkeleydione. Especially prhC might be a multifunctional enzyme that catalyzes the D-ring expansion via intramolecular methoxy rearrangement, as well as the hydrolysis of the expanded D-ring. The sequence is that of Non-reducing polyketide synthase prhL from Penicillium brasilianum.